Reading from the N-terminus, the 627-residue chain is Spindle assembly abnormal protein 6 homolog (627 aa).

Residues V39 to L91 form the PISA domain. Residues L153–N473 adopt a coiled-coil conformation. Disordered regions lie at residues Q187 to K257 and E561 to F586. Residues E191–S201 are compositionally biased toward basic and acidic residues. Residues E202–R213 are compositionally biased toward polar residues. The segment covering H214–L226 has biased composition (basic and acidic residues). A compositionally biased stretch (low complexity) spans Q229 to Q238.

In terms of assembly, nine homodimers form a cartwheel structure with an internal diameter of 23 nM and radial spokes connecting to the microtubule triplets.

The protein resides in the cytoplasm. It localises to the cytoskeleton. The protein localises to the microtubule organizing center. It is found in the centrosome. In terms of biological role, central scaffolding component of the centrioles ensuring their 9-fold symmetry. Required for centrosome biogenesis and duplication: required both for mother-centriole-dependent centriole duplication and deuterosome-dependent centriole amplification in multiciliated cells. The polypeptide is Spindle assembly abnormal protein 6 homolog (sass6) (Danio rerio (Zebrafish)).